The following is a 245-amino-acid chain: 1-(5-phosphoribosyl)-5-[(5-phosphoribosylamino)methylideneamino] imidazole-4-carboxamide isomerase (245 aa).

Residue Asp7 is the Proton acceptor of the active site. Asp129 (proton donor) is an active-site residue.

Belongs to the HisA/HisF family.

The protein localises to the cytoplasm. The catalysed reaction is 1-(5-phospho-beta-D-ribosyl)-5-[(5-phospho-beta-D-ribosylamino)methylideneamino]imidazole-4-carboxamide = 5-[(5-phospho-1-deoxy-D-ribulos-1-ylimino)methylamino]-1-(5-phospho-beta-D-ribosyl)imidazole-4-carboxamide. Its pathway is amino-acid biosynthesis; L-histidine biosynthesis; L-histidine from 5-phospho-alpha-D-ribose 1-diphosphate: step 4/9. The sequence is that of 1-(5-phosphoribosyl)-5-[(5-phosphoribosylamino)methylideneamino] imidazole-4-carboxamide isomerase from Escherichia coli O127:H6 (strain E2348/69 / EPEC).